We begin with the raw amino-acid sequence, 1032 residues long: Error-prone DNA polymerase (1032 aa).

This sequence belongs to the DNA polymerase type-C family. DnaE2 subfamily.

The protein localises to the cytoplasm. The catalysed reaction is DNA(n) + a 2'-deoxyribonucleoside 5'-triphosphate = DNA(n+1) + diphosphate. In terms of biological role, DNA polymerase involved in damage-induced mutagenesis and translesion synthesis (TLS). It is not the major replicative DNA polymerase. In Hahella chejuensis (strain KCTC 2396), this protein is Error-prone DNA polymerase.